The chain runs to 297 residues: Protein PecM (297 aa).

10 consecutive transmembrane segments (helical) span residues 6-26 (FAFY…QFLP), 38-58 (ALPA…GWLW), 60-80 (LFVL…FAAY), 86-106 (VVAL…FLLL), 116-136 (VAAV…KAPL), 138-158 (PAGL…LVLT), 167-187 (MTML…ILPV), 203-223 (LAGY…MWFS), 231-251 (VIMS…GFLF), and 261-281 (LVGV…SLFS). EamA domains are found at residues 12–130 (CVWG…LLIS) and 149–276 (MSMA…IVQD).

It belongs to the EamA transporter family.

It localises to the cell membrane. Functionally, involved in pectinase, cellulase, and blue pigment regulation. This is Protein PecM (pecM) from Dickeya dadantii (strain 3937) (Erwinia chrysanthemi (strain 3937)).